We begin with the raw amino-acid sequence, 259 residues long: Thiazole synthase (259 aa).

The active-site Schiff-base intermediate with DXP is Lys95. 1-deoxy-D-xylulose 5-phosphate is bound by residues Gly156, 182–183 (AG), and 204–205 (NT).

Belongs to the ThiG family. Homotetramer. Forms heterodimers with either ThiH or ThiS.

It is found in the cytoplasm. It catalyses the reaction [ThiS sulfur-carrier protein]-C-terminal-Gly-aminoethanethioate + 2-iminoacetate + 1-deoxy-D-xylulose 5-phosphate = [ThiS sulfur-carrier protein]-C-terminal Gly-Gly + 2-[(2R,5Z)-2-carboxy-4-methylthiazol-5(2H)-ylidene]ethyl phosphate + 2 H2O + H(+). Its pathway is cofactor biosynthesis; thiamine diphosphate biosynthesis. Functionally, catalyzes the rearrangement of 1-deoxy-D-xylulose 5-phosphate (DXP) to produce the thiazole phosphate moiety of thiamine. Sulfur is provided by the thiocarboxylate moiety of the carrier protein ThiS. In vitro, sulfur can be provided by H(2)S. The chain is Thiazole synthase from Baumannia cicadellinicola subsp. Homalodisca coagulata.